The chain runs to 231 residues: Large ribosomal subunit protein uL1 (231 aa).

It belongs to the universal ribosomal protein uL1 family. Part of the 50S ribosomal subunit.

Functionally, binds directly to 23S rRNA. The L1 stalk is quite mobile in the ribosome, and is involved in E site tRNA release. Protein L1 is also a translational repressor protein, it controls the translation of the L11 operon by binding to its mRNA. This is Large ribosomal subunit protein uL1 from Pseudomonas syringae pv. tomato (strain ATCC BAA-871 / DC3000).